A 494-amino-acid polypeptide reads, in one-letter code: 3-octaprenyl-4-hydroxybenzoate carboxy-lyase (494 aa).

Residue asparagine 172 participates in Mn(2+) binding. Prenylated FMN is bound by residues 175 to 177, 189 to 191, and 194 to 195; these read IYR, RWL, and RG. Glutamate 238 serves as a coordination point for Mn(2+). Aspartate 294 acts as the Proton donor in catalysis.

This sequence belongs to the UbiD family. In terms of assembly, homohexamer. Prenylated FMN serves as cofactor. The cofactor is Mn(2+).

The protein localises to the cell membrane. It carries out the reaction a 4-hydroxy-3-(all-trans-polyprenyl)benzoate + H(+) = a 2-(all-trans-polyprenyl)phenol + CO2. Its pathway is cofactor biosynthesis; ubiquinone biosynthesis. Functionally, catalyzes the decarboxylation of 3-octaprenyl-4-hydroxy benzoate to 2-octaprenylphenol, an intermediate step in ubiquinone biosynthesis. This chain is 3-octaprenyl-4-hydroxybenzoate carboxy-lyase, found in Albidiferax ferrireducens (strain ATCC BAA-621 / DSM 15236 / T118) (Rhodoferax ferrireducens).